Here is a 473-residue protein sequence, read N- to C-terminus: Reticulon-4 receptor (473 aa).

The signal sequence occupies residues 1 to 26; it reads MKRASSGGSRLLAWVLWLQAWRVATP. 2 disulfides stabilise this stretch: C27/C33 and C31/C43. The region spanning 27–57 is the LRRNT domain; the sequence is CPGACVCYNEPKVTTSCPQQGLQAVPTGIPA. 9 LRR repeats span residues 56-79, 80-103, 105-128, 129-152, 153-176, 178-200, 202-224, 225-248, and 250-273; these read PASS…SFQS, CRNL…AFTG, TLLE…TFRG, LGHL…LFRG, LAAL…TFRD, GNLT…AFRG, HSLD…AFRD, LGRL…VLVP, and RSLQ…PLWA. N82 carries an N-linked (GlcNAc...) asparagine glycan. In terms of domain architecture, LRRCT spans 260–310; the sequence is NPWVCDCRARPLWAWLQKFRGSSSEVPCNLPQRLAGRDLKRLAASDLEGCA. Disulfide bonds link C264-C287, C266-C335, and C309-C336. The interval 346 to 446 is disordered; it reads VLEPGRPASA…GSSGTGDAEG (101 aa). An N-linked (GlcNAc...) asparagine glycan is attached at N372. Positions 413–429 are enriched in basic residues; sequence PRRRPGCSRKNRTRSHC. Over residues 434–445 the composition is skewed to gly residues; it reads AGSGSSGTGDAE. S447 carries the GPI-anchor amidated serine lipid modification. Positions 448-473 are cleaved as a propeptide — removed in mature form; that stretch reads GALPALACSLAPLGLALVLWTVLGPC.

This sequence belongs to the Nogo receptor family. Homodimer. Interacts with MAG. Interacts with RTN4 and OMG. Interacts with LINGO1 and NGFR. Interacts with KIAA0319L. Interacts with OLFM1; this inhibits interaction with LINGO1 and NGFR. Post-translationally, N-glycosylated. O-glycosylated. Contains terminal sialic acid groups on its glycan chains. Detected in embryonic cerebellum, in spinal cord motor neurons and in dorsal root ganglia. Detected in adult brain, in neocortex, hippocampus, striatum, thalamus and dorsal root ganglion neurons (at protein level).

It localises to the cell membrane. The protein resides in the membrane raft. Its subcellular location is the cell projection. The protein localises to the dendrite. It is found in the perikaryon. It localises to the axon. Receptor for RTN4, OMG and MAG. Functions as a receptor for the sialylated gangliosides GT1b and GM1. Besides, functions as a receptor for chondroitin sulfate proteoglycans. Can also bind heparin. Intracellular signaling cascades are triggered via the coreceptor NGFR. Signaling mediates activation of Rho and downstream reorganization of the actin cytoskeleton. Mediates axonal growth inhibition. May play a role in regulating axon regeneration and neuronal plasticity in the adult central nervous system. Plays a role in postnatal brain development. Required for normal axon migration across the brain midline and normal formation of the corpus callosum. Protects motoneurons against apoptosis; protection against apoptosis is probably mediated via interaction with MAG. Acts in conjunction with RTN4 and LINGO1 in regulating neuronal precursor cell motility during cortical development. Like other family members, plays a role in restricting the number dendritic spines and the number of synapses that are formed during brain development. This is Reticulon-4 receptor (Rtn4r) from Rattus norvegicus (Rat).